The sequence spans 1030 residues: Kinesin-related protein 6 (1030 aa).

Residues 3 to 66 (FENDQLYNWL…FHLLQQLKKQ (64 aa)) enclose the SAM domain. Disordered stretches follow at residues 66 to 164 (QTPP…SDFM) and 178 to 308 (RQQY…EDDD). Polar residues predominate over residues 68–80 (PPISNTSSPVINS). Composition is skewed to low complexity over residues 81 to 117 (NNNNNNNNNNNNNNNNNNNNNNNNNNNNNNNNNNNNN), 125 to 164 (TSTSSLLSNNNLMSTQTQQSSSSSSSSSLSSKSNSNSDFM), 181 to 197 (YAKQQQQQQSTQTKYQS), and 225 to 238 (QQQQQQQQQQQQQD). The segment covering 239 to 290 (FEFEEEEEEEDQQQQYDEEEEEEEEYEEDFYKEDLGEIDDGNVLDISDDEPD) has biased composition (acidic residues). The Kinesin motor domain maps to 453-775 (RIRVCVRKRP…LRYADRVKEL (323 aa)). An ATP-binding site is contributed by 543-550 (GQTGSGKT). Composition is skewed to low complexity over residues 826–839 (INSQQPIIQQTSQP), 849–906 (QQQE…QTQP), and 981–1009 (PIQQQQQQQQPIQQQQQSTPQPSQLQTPQ). Disordered stretches follow at residues 826–915 (INSQ…KIDF) and 981–1030 (PIQQ…SSRN).

Belongs to the TRAFAC class myosin-kinesin ATPase superfamily. Kinesin family.

It is found in the cytoplasm. It localises to the cytoskeleton. In terms of biological role, microtubule-associated force-producing protein that plays a role in organelle transport. Its motor activity is directed toward the microtubule's plus end. This chain is Kinesin-related protein 6 (kif6), found in Dictyostelium discoideum (Social amoeba).